The primary structure comprises 163 residues: Endoribonuclease YbeY (163 aa).

Zn(2+) contacts are provided by His121, His125, and His131.

The protein belongs to the endoribonuclease YbeY family. The cofactor is Zn(2+).

The protein resides in the cytoplasm. Functionally, single strand-specific metallo-endoribonuclease involved in late-stage 70S ribosome quality control and in maturation of the 3' terminus of the 16S rRNA. The polypeptide is Endoribonuclease YbeY (Synechococcus sp. (strain JA-2-3B'a(2-13)) (Cyanobacteria bacterium Yellowstone B-Prime)).